The chain runs to 161 residues: TRAF-interacting protein with FHA domain-containing protein B (161 aa).

Residues 36-91 (LLLGRGQDAHLQLQLPRLSRRHLSLEPYLEKGSALLAFCLKALSRKGCVWVNGLTL) enclose the FHA domain.

In terms of assembly, interacts with TIFA.

Functionally, inhibits TIFA-mediated TRAF6 activation possibly by inducing a conformational change in TIFA. The sequence is that of TRAF-interacting protein with FHA domain-containing protein B from Homo sapiens (Human).